A 945-amino-acid chain; its full sequence is MSQPPSGGAAPAATSASAAAAATEARMHPEGCSRKQQRAQSPARPRDNSLRQTAGATRSPLGVGPKLNSVRQQQLQQQQQQGNKITGRSTSGTGSRGLGGGAEKAVPSIPKGAVPGAVQPAPGAEGSPAAILASVSFRRSGQPEEAPREIESGPSKVGEPPPLGGVGGGGEGGGAGGGPGDREGGAPQPPPPRGWRGKGVRATQRGSSVAEGVSPSPPTAATSKTPGPGSRNSGSGSTGSGSGGGGSYWKEGCLQSELIQFHLKKERAAAAAAAAQMHTKNGGGGSRSSPVAGAPAICEPLVVPSSSPMAAAAEGPQQSAEGNGSGGAMQAAAPPSSQPHSQQLQEQEDMQEEMEKLREENETLKNEIDELRTEMDEMRDTFFEEDACQLQEMRHELERANKNCRILQYRLRKAERKRLRYAQTGEIDGELLRSLEQDLKVAKDVSVRLHHELENVEEKRTTTEDENEKLRQQLIEVEIAKQALQNELEKMKELSLKRRGSKDLPKSEKKAQQTPTEDDNEDLKCQLQFVKEEAALMRKKMAKIDKEKDRFEHELQKYRSFYGDLDSPLPKGEAGGPPSTREAELKLRLRLVEEEANILGRKIVELEVENRGLKAELDDLRGEDFNGSSNPLMREQSESLSELRQHLQLVEDETELLRRNVADLEEQNKRITAELNKYKYKSSGHDSSRHHDNAKTEALQEELKAARLQINELSGKVMQLQYENRVLMSNMQRYDLASHLGIRGSPRDSDAESDAGKKESDDDSRPPHRKREGPIGGESDSEEVRNIRSLTPTRSFYPTPGPWPKSFSDRQQMKDIRSEAERLGKTIDRLIADTSTIITEARIYVANGDLFGLMDEEDDGSRIREHELLYRINAQMKAFRKELQTFIDRLEVPKSADDRGAEEPISVSQMFQPIILLILILVLFSSLSYTTIFKLVFLFTLFFVL.

3 stretches are compositionally biased toward low complexity: residues Met-1–Thr-23, Gln-72–Thr-93, and Pro-110–Gly-126. Positions Met-1 to Ala-25 are cleaved as a signal peptide. Disordered stretches follow at residues Met-1–Lys-250, Lys-265–Gly-293, Ser-307–Asn-366, and Leu-494–Asp-522. Positions Gly-141 to Glu-151 are enriched in basic and acidic residues. Residues Gly-164–Pro-179 show a composition bias toward gly residues. A compositionally biased stretch (low complexity) spans Thr-219–Ser-235. Residues Gly-236–Ser-247 are compositionally biased toward gly residues. Low complexity predominate over residues Ala-328–Gln-345. The stretch at His-340–Asn-724 forms a coiled coil. Basic and acidic residues-rich tracts occupy residues Glu-353–Asn-366 and Leu-494–Ala-511. Residue Ser-567 is modified to Phosphoserine. A disordered region spans residues Gly-741–Gln-811. Basic and acidic residues predominate over residues Ser-745–Pro-766. Phosphoserine is present on Ser-779. A coiled-coil region spans residues Asp-809–Asp-833. Residues Pro-913–Phe-933 form a helical membrane-spanning segment.

It belongs to the MTCL family.

The protein localises to the membrane. This is Microtubule cross-linking factor 3 (Mtcl3) from Mus musculus (Mouse).